Reading from the N-terminus, the 61-residue chain is MAKKSMIAKAARKPKFSARGYTRCQICGRPHSVYKDFGICRVCLRKMANEGLIPGLKKASW.

Residues cysteine 24, cysteine 27, cysteine 40, and cysteine 43 each contribute to the Zn(2+) site.

This sequence belongs to the universal ribosomal protein uS14 family. Zinc-binding uS14 subfamily. In terms of assembly, part of the 30S ribosomal subunit. Contacts proteins S3 and S10. Requires Zn(2+) as cofactor.

In terms of biological role, binds 16S rRNA, required for the assembly of 30S particles and may also be responsible for determining the conformation of the 16S rRNA at the A site. This is Small ribosomal subunit protein uS14 from Campylobacter fetus subsp. fetus (strain 82-40).